A 5043-amino-acid chain; its full sequence is Polyketide synthase PksJ (5043 aa).

Residues 141-481 (AVITDRGMHQ…ELPEIETSYT (341 aa)) form an adenylation 1 region. The Carrier 1 domain occupies 590–667 (RVREEIQKHL…RLASYLSEHE (78 aa)). Position 627 is an O-(pantetheine 4'-phosphoryl)serine (serine 627). The segment at 690-989 (QATFQPLSEV…NMLPIRSELN (300 aa)) is condensation. The segment at 1181–1578 (TYRELDEKST…EHPGILECVV (398 aa)) is adenylation 2. In terms of domain architecture, Carrier 2 spans 1654–1729 (TSPKNIQDTV…NISQYITEQR (76 aa)). Serine 1689 is subject to O-(pantetheine 4'-phosphoryl)serine. The 427-residue stretch at 1760-2186 (DDSVAIIGIS…GTNTHAIFEQ (427 aa)) folds into the Ketosynthase family 3 (KS3) 1 domain. Catalysis depends on for beta-ketoacyl synthase 1 activity residues cysteine 1932, histidine 2068, and histidine 2108. Positions 2374–2499 (HPLLHQNTSD…GSAELASAAE (126 aa)) are N-terminal hotdog fold. The region spanning 2374-2661 (HPLLHQNTSD…TRVLEGEVHT (288 aa)) is the PKS/mFAS DH domain. The active-site Proton acceptor; for dehydratase activity is histidine 2403. The C-terminal hotdog fold stretch occupies residues 2513–2661 (GKGKMSPDQF…TRVLEGEVHT (149 aa)). Aspartate 2575 serves as the catalytic Proton donor; for dehydratase activity. 2 Carrier domains span residues 3114–3188 (RKLE…VAAY) and 3212–3286 (SSLE…TVEH). O-(pantetheine 4'-phosphoryl)serine occurs at positions 3148 and 3246. A disordered region spans residues 3291 to 3314 (VQEREKPEGQEELQTKSSEAPKIT). Residues 3339 to 3779 (FEPVAIVGIS…GVNAHIVIEE (441 aa)) enclose the Ketosynthase family 3 (KS3) 2 domain. Residues cysteine 3511, histidine 3646, and histidine 3695 each act as for beta-ketoacyl synthase 2 activity in the active site. Residues 3839 to 3872 (REEMDERLACVAGTMQELEEKLQAFVDGKEETDE) adopt a coiled-coil conformation. The region spanning 4459-4536 (GLLSETQSWL…RFADWLIGSY (78 aa)) is the Carrier 5 domain. Serine 4496 carries the O-(pantetheine 4'-phosphoryl)serine modification. The region spanning 4588–4992 (AEGIAVVGLS…GTNAHVIVEA (405 aa)) is the Ketosynthase family 3 (KS3) 3 domain. Cysteine 4743 acts as the For beta-ketoacyl synthase 3 activity in catalysis.

The protein belongs to the ATP-dependent AMP-binding enzyme family. It depends on pantetheine 4'-phosphate as a cofactor.

It is found in the cytoplasm. It functions in the pathway antibiotic biosynthesis; bacillaene biosynthesis. Functionally, involved in some intermediate steps for the synthesis of the antibiotic polyketide bacillaene which is involved in secondary metabolism. The sequence is that of Polyketide synthase PksJ (pksJ) from Bacillus subtilis (strain 168).